The primary structure comprises 183 residues: Putative 3-methyladenine DNA glycosylase (183 aa).

Belongs to the DNA glycosylase MPG family.

The protein is Putative 3-methyladenine DNA glycosylase of Rickettsia africae (strain ESF-5).